We begin with the raw amino-acid sequence, 133 residues long: Thioredoxin-2, mitochondrial (133 aa).

Residues 1-29 constitute a mitochondrion transit peptide; it reads MRGFIANSLKPHMRSFALRRSFTSSRILR. The 104-residue stretch at 30–133 folds into the Thioredoxin domain; sequence KVNAVESFGD…LSSLLAKYQE (104 aa). Residues Cys-59 and Cys-62 each act as nucleophile in the active site. Residues Cys-59 and Cys-62 are joined by a disulfide bond.

It belongs to the thioredoxin family. In terms of assembly, interacts with arg3.

It is found in the mitochondrion. In terms of biological role, disulfide reductase which serves multiple functions in mitochondria, protecting mitochondrial components against thiol-oxidative damage as a thiol-disulfide oxidoreductase, and supporting urea cycle and respiration in mitochondria in a manner independent of active site thiols. In Schizosaccharomyces pombe (strain 972 / ATCC 24843) (Fission yeast), this protein is Thioredoxin-2, mitochondrial (trx2).